The primary structure comprises 413 residues: Azaphilone biosynthesis cluster protein M (413 aa).

Residues 123–138 show a composition bias toward polar residues; the sequence is STQPDQVQPNQPTPSF. Residues 123–145 form a disordered region; sequence STQPDQVQPNQPTPSFESAAGAS.

It participates in secondary metabolite biosynthesis. Functionally, part of the gene cluster that mediates the biosynthesis of azaterrilone A and other azaphilones, a class of fungal metabolites characterized by a highly oxygenated pyrano-quinone bicyclic core and exhibiting a broad range of bioactivities. The first step of the pathway begins with the non-reducing polyketide synthase tazA that assembles one acetyl-CoA starter unit, five malonyl-CoA units, and catalyzes a series of Claisen condensations, methylation, PT-mediated cyclization, and finally releases the first hexaketide precursor through the R-domain. The tazA product then undergoes reduction on its terminal ketone and the following pyran-ring formation by yet undetermined enzyme(s). Dehydration and enoyl reduction, possibly involving the trans-enoyl reductase tazE leads to the next intermediate. TazD is predicted as an acetyltransferase and might catalyze the acetylation steps leading to the synthesis of azaterrilone A. Azaterrilone A is not the final product of the taz pathway and both the highly reducing polyketide synthase tazB and the dual enzyme tazHJ catalyze late steps of the pathway, leading to the production of the 2 final stereoisomers that contain additional polyketide modification whose structures have still to be determined. The chain is Azaphilone biosynthesis cluster protein M from Aspergillus terreus (strain NIH 2624 / FGSC A1156).